Here is a 412-residue protein sequence, read N- to C-terminus: MQQLIDNLKKRGILDNSSAGLESLTVPVSAYLGFDPTAPSLHIGHWIGICFLRRLAAYGITPVALVGGATGMIGDPSGKSVERSLLDQAQVLDNSKKIAAALASYLPGIRIVNNADWLGSLSMVDFLRDVGKHFRLGSMLAKDVVKQRVYSEEGISYTEFSYLLLQSYDFAHLFKEHNVVLQCGGSDQWGNITSGIDYIRRRGLGQAYGLTYPLLTDSKGKKIGKTESGTIWLDPALTPPYELFQYFLRLPDQEISKVMRTLTLLDNEEIFALDERLTSDPQAVKKYIAEVIVKDVHGSEGLAQAQAATESFFASKGKSITEAELVALVESGVGVKVARTDLIGKRWLDIVVELGFCSSRGQARRLIQQRGLYINQEPLADEQSILDGTQLCFDRYVLLSQGKRKKQVIDLN.

L-tyrosine is bound at residue Tyr-31. Residues 36–45 carry the 'HIGH' region motif; it reads PTAPSLHIGH. Tyr-162 and Gln-166 together coordinate L-tyrosine. Residues 222–226 carry the 'KMSKS' region motif; sequence KIGKT. Position 225 (Lys-225) interacts with ATP. The S4 RNA-binding domain occupies 345–411; sequence KRWLDIVVEL…GKRKKQVIDL (67 aa).

Belongs to the class-I aminoacyl-tRNA synthetase family. TyrS type 1 subfamily. As to quaternary structure, homodimer.

The protein resides in the cytoplasm. It catalyses the reaction tRNA(Tyr) + L-tyrosine + ATP = L-tyrosyl-tRNA(Tyr) + AMP + diphosphate + H(+). Functionally, catalyzes the attachment of tyrosine to tRNA(Tyr) in a two-step reaction: tyrosine is first activated by ATP to form Tyr-AMP and then transferred to the acceptor end of tRNA(Tyr). This Chlamydia trachomatis serovar A (strain ATCC VR-571B / DSM 19440 / HAR-13) protein is Tyrosine--tRNA ligase.